The primary structure comprises 160 residues: Large ribosomal subunit protein bL17 (160 aa).

A disordered region spans residues 128–160 (KKATKTRRSRKRKSADVVVEAAPAEETPKAAEE). The span at 129–140 (KATKTRRSRKRK) shows a compositional bias: basic residues.

This sequence belongs to the bacterial ribosomal protein bL17 family. As to quaternary structure, part of the 50S ribosomal subunit. Contacts protein L32.

In Porphyromonas gingivalis (strain ATCC 33277 / DSM 20709 / CIP 103683 / JCM 12257 / NCTC 11834 / 2561), this protein is Large ribosomal subunit protein bL17.